Here is a 192-residue protein sequence, read N- to C-terminus: Putative molybdenum cofactor guanylyltransferase (192 aa).

GTP is bound by residues 8–10 (LAG), K21, D67, and D101. Residue D101 coordinates Mg(2+).

The protein belongs to the MobA family. Monomer. The cofactor is Mg(2+).

The protein localises to the cytoplasm. It carries out the reaction Mo-molybdopterin + GTP + H(+) = Mo-molybdopterin guanine dinucleotide + diphosphate. Its function is as follows. Transfers a GMP moiety from GTP to Mo-molybdopterin (Mo-MPT) cofactor (Moco or molybdenum cofactor) to form Mo-molybdopterin guanine dinucleotide (Mo-MGD) cofactor. The chain is Putative molybdenum cofactor guanylyltransferase from Neisseria meningitidis serogroup B (strain ATCC BAA-335 / MC58).